Consider the following 1019-residue polypeptide: MKSYCLLLSITLSCCCSAEDLPDPPSIHLNSKYLPNQAEAILTAGTPFTLRCTGASSVHWSSSAFCLLYHGRLVDPIDVQRADPRHTGTYCCGYTNQSLEHLSTWIHLYVKDPADPSTVFVTPRNSPRVKEGQDFLYRCLLTDPSVTNLTFQPEDNIQGSGQHLPVGMNVTVDPQRGALIQDVQRSFSGQYVCSGWKDGRHFISRSFHLLVAPRLPPPSVAIHQNKAVRLEGEKFEVTCVSSSTTHLFNVTWTHLTKKNFDVAVTREYRNSHMYISSTLMIAAVSQEDRGTYTCAAASEDGVTTATTHLIVLDSRFMTTYLKTWHANTKAKNKEISKEIDGNLTANSTSIDIEANRSSKLHMKMELIANVSTDGVHVNNISSSTTVEAYEGLDVILTFVTESYPPLSNQSWTKPTKVNNNNNVTMYQENYSINDTRSEASLLLRRVRQEDHGSYTFHFSNSFFSGSQNIDLRIYRSPSAIISVEKNTLTCSSSGYPVPTIAWYSCPGILKTCGNLTTTESSEADPTSEHDEENVRKLLNLPLSTGGDVTAECIASNQVGAFRKVFHLREHNSAFMSALIGAGSTAAILFLLLLVVFYKWRQKPKYEIRWKIIESTEGNHYTFVDPTLLPYNYKWEFPRDKLRLGAVLGSGAFGKVVEATAYGLGTDDVTRVAVKMLKPRALSEEREALMSELKILSHLGYHDNIVNLLGACTQGGPMLMITEYCSYGDLLNFLRARAQDFMASILSADEMEGDPFYKNMATLYGRLRSDSGISCCSDYQEMQPILGSAEKQQGVQMGGLSFGDLLSFSHQVAQGLDFLSTRNCIHRDVAARNVLLTDHRVAKICDFGLARDIQNDDSYIVQGNARLPVKWMAPESIFQCVYTVQSDVWSYGVLLWEIFSLGKSPYPNVAVDTHFYKMIKDGRHMTQPDFAPVEMYQLMTHCWSLEPTDRPTFKMICQLIDRLLQSNDDTNHQSYSNINETKKDDFKGGKSQRRGEEEEQRRQRGNLWIPLSVTNIYQLS.

A signal peptide spans 1–18 (MKSYCLLLSITLSCCCSA). Over 19–576 (EDLPDPPSIH…LREHNSAFMS (558 aa)) the chain is Extracellular. 3 Ig-like C2-type domains span residues 37–109 (QAEA…IHLY), 106–212 (IHLY…LLVA), and 224–312 (QNKA…LIVL). An intrachain disulfide couples C52 to C92. N-linked (GlcNAc...) asparagine glycans are attached at residues N96, N148, N169, N249, N342, N346, N355, N369, N379, N408, N422, N429, N433, and N514. 2 disulfide bridges follow: C139–C193 and C239–C294. 2 consecutive Ig-like C2-type domains span residues 383-474 (STTV…LRIY) and 487-567 (TLTC…VFHL). The cysteines at positions 490 and 552 are disulfide-linked. Residues 577 to 597 (ALIGAGSTAAILFLLLLVVFY) form a helical membrane-spanning segment. Residues 598-1019 (KWRQKPKYEI…LSVTNIYQLS (422 aa)) lie on the Cytoplasmic side of the membrane. Residues 601–633 (QKPKYEIRWKIIESTEGNHYTFVDPTLLPYNYK) form a regulatory juxtamembrane domain region. Y620 is subject to Phosphotyrosine; by autocatalysis. One can recognise a Protein kinase domain in the interval 641-963 (LRLGAVLGSG…MICQLIDRLL (323 aa)). ATP contacts are provided by residues 647–655 (LGSGAFGKV) and K674. A phosphotyrosine; by autocatalysis mark is found at Y756 and Y778. D827 functions as the Proton acceptor in the catalytic mechanism. The tract at residues 845 to 867 (DFGLARDIQNDDSYIVQGNARLP) is activation loop. 2 positions are modified to phosphotyrosine; by autocatalysis: Y858 and Y974. A disordered region spans residues 970–1001 (NHQSYSNINETKKDDFKGGKSQRRGEEEEQRR). Residues 979–1001 (ETKKDDFKGGKSQRRGEEEEQRR) are compositionally biased toward basic and acidic residues. Residue Y1016 is modified to Phosphotyrosine; by autocatalysis.

The protein belongs to the protein kinase superfamily. Tyr protein kinase family. CSF-1/PDGF receptor subfamily. Monomer. Homodimer. Interacts with CSF1. In terms of processing, autophosphorylated in response to CSF1 binding. autophosphorylation, leading to its degradation. Post-translationally, ubiquitinated. Becomes rapidly polyubiquitinated after autophosphorylation, leading to its degradation.

It localises to the cell membrane. The catalysed reaction is L-tyrosyl-[protein] + ATP = O-phospho-L-tyrosyl-[protein] + ADP + H(+). Its activity is regulated as follows. Present in an inactive conformation in the absence of bound ligand. CSF1 binding leads to dimerization and activation by autophosphorylation on tyrosine residues. In terms of biological role, tyrosine-protein kinase that acts as a cell-surface receptor for CSF1 and plays an essential role in the regulation of survival, proliferation and differentiation of hematopoietic precursor cells, especially mononuclear phagocytes, such as macrophages and monocytes. Plays an important role in innate immunity and in inflammatory processes. Plays an important role in the regulation of osteoclast proliferation and differentiation, the regulation of bone resorption, and is required for normal bone development. Promotes reorganization of the actin cytoskeleton, regulates formation of membrane ruffles, cell adhesion and cell migration. Activates several signaling pathways in response to ligand binding. This Takifugu rubripes (Japanese pufferfish) protein is Macrophage colony-stimulating factor 1 receptor 2 (csf1r2).